Here is a 29-residue protein sequence, read N- to C-terminus: Trypsin inhibitor 2 (29 aa).

3 disulfides stabilise this stretch: cysteine 3/cysteine 20, cysteine 10/cysteine 22, and cysteine 16/cysteine 28.

The protein belongs to the protease inhibitor I7 (squash-type serine protease inhibitor) family.

It is found in the secreted. In terms of biological role, inhibits trypsin. This Bryonia dioica (Red bryony) protein is Trypsin inhibitor 2.